Here is an 873-residue protein sequence, read N- to C-terminus: Serine/threonine-protein phosphatase 6 regulatory subunit 3 (873 aa).

Disordered regions lie at residues Ile628 to Gln659, Ala693 to Lys715, Leu729 to Ala755, Pro767 to Lys787, and Ala840 to Val873. A compositionally biased stretch (acidic residues) spans Asp644–Asp655. Residues Leu729–Ser739 are compositionally biased toward low complexity.

This sequence belongs to the SAPS family. Protein phosphatase 6 (PP6) holoenzyme is proposed to be a heterotrimeric complex formed by the catalytic subunit, a SAPS domain-containing subunit (PP6R) and an ankyrin repeat-domain containing regulatory subunit (ARS).

In terms of biological role, regulatory subunit of protein phosphatase 6 (PP6). May function as a scaffolding PP6 subunit. The chain is Serine/threonine-protein phosphatase 6 regulatory subunit 3 (PPP6R3) from Gallus gallus (Chicken).